Here is an 827-residue protein sequence, read N- to C-terminus: Probable beta-glucosidase H (827 aa).

Asp-223 is a catalytic residue. In terms of domain architecture, PA14 spans 387 to 546; that stretch reads RLLTNAVMHF…DSAEMVRSAV (160 aa). Asn-471, Asn-594, Asn-600, and Asn-625 each carry an N-linked (GlcNAc...) asparagine glycan.

This sequence belongs to the glycosyl hydrolase 3 family.

It is found in the secreted. It catalyses the reaction Hydrolysis of terminal, non-reducing beta-D-glucosyl residues with release of beta-D-glucose.. It participates in glycan metabolism; cellulose degradation. Its function is as follows. Beta-glucosidases are one of a number of cellulolytic enzymes involved in the degradation of cellulosic biomass. Catalyzes the last step releasing glucose from the inhibitory cellobiose. This is Probable beta-glucosidase H (bglH) from Aspergillus oryzae (strain ATCC 42149 / RIB 40) (Yellow koji mold).